A 460-amino-acid polypeptide reads, in one-letter code: Cysteine--tRNA ligase (460 aa).

Cys29 serves as a coordination point for Zn(2+). The 'HIGH' region motif lies at Pro31 to Asn41. Zn(2+)-binding residues include Cys227, His252, and Glu256. The 'KMSKS' region motif lies at Lys285–Ser289. Lys288 serves as a coordination point for ATP.

Belongs to the class-I aminoacyl-tRNA synthetase family. As to quaternary structure, monomer. The cofactor is Zn(2+).

The protein localises to the cytoplasm. It catalyses the reaction tRNA(Cys) + L-cysteine + ATP = L-cysteinyl-tRNA(Cys) + AMP + diphosphate. This Bradyrhizobium diazoefficiens (strain JCM 10833 / BCRC 13528 / IAM 13628 / NBRC 14792 / USDA 110) protein is Cysteine--tRNA ligase.